Here is a 396-residue protein sequence, read N- to C-terminus: 1-deoxy-D-xylulose 5-phosphate reductoisomerase (396 aa).

6 residues coordinate NADPH: Thr14, Gly15, Ser16, Ile17, Gly40, and Asn128. Lys129 contacts 1-deoxy-D-xylulose 5-phosphate. Glu130 serves as a coordination point for NADPH. Position 154 (Asp154) interacts with Mn(2+). Ser155, Glu156, Ser180, and His203 together coordinate 1-deoxy-D-xylulose 5-phosphate. A Mn(2+)-binding site is contributed by Glu156. Gly209 contributes to the NADPH binding site. The 1-deoxy-D-xylulose 5-phosphate site is built by Ser216, Asn221, Lys222, and Glu225. Glu225 provides a ligand contact to Mn(2+).

This sequence belongs to the DXR family. The cofactor is Mg(2+). Mn(2+) serves as cofactor.

The catalysed reaction is 2-C-methyl-D-erythritol 4-phosphate + NADP(+) = 1-deoxy-D-xylulose 5-phosphate + NADPH + H(+). It functions in the pathway isoprenoid biosynthesis; isopentenyl diphosphate biosynthesis via DXP pathway; isopentenyl diphosphate from 1-deoxy-D-xylulose 5-phosphate: step 1/6. In terms of biological role, catalyzes the NADPH-dependent rearrangement and reduction of 1-deoxy-D-xylulose-5-phosphate (DXP) to 2-C-methyl-D-erythritol 4-phosphate (MEP). The sequence is that of 1-deoxy-D-xylulose 5-phosphate reductoisomerase from Xylella fastidiosa (strain 9a5c).